Reading from the N-terminus, the 263-residue chain is Acyl-[acyl-carrier-protein]--UDP-N-acetylglucosamine O-acyltransferase (263 aa).

Belongs to the transferase hexapeptide repeat family. LpxA subfamily. Homotrimer.

The protein localises to the cytoplasm. The catalysed reaction is a (3R)-hydroxyacyl-[ACP] + UDP-N-acetyl-alpha-D-glucosamine = a UDP-3-O-[(3R)-3-hydroxyacyl]-N-acetyl-alpha-D-glucosamine + holo-[ACP]. The protein operates within glycolipid biosynthesis; lipid IV(A) biosynthesis; lipid IV(A) from (3R)-3-hydroxytetradecanoyl-[acyl-carrier-protein] and UDP-N-acetyl-alpha-D-glucosamine: step 1/6. Its function is as follows. Involved in the biosynthesis of lipid A, a phosphorylated glycolipid that anchors the lipopolysaccharide to the outer membrane of the cell. The polypeptide is Acyl-[acyl-carrier-protein]--UDP-N-acetylglucosamine O-acyltransferase (Tolumonas auensis (strain DSM 9187 / NBRC 110442 / TA 4)).